The sequence spans 196 residues: Phosphatidyl-N-methylethanolamine N-methyltransferase (196 aa).

Met1 is a topological domain (lumenal). The helical intramembrane region spans 2–28 (AIFEINNSFLICAVSIALNPLLWNIAA). The Lumenal portion of the chain corresponds to 29–40 (RSEYNHKTLTKL). Residues 41–62 (ANGDSKKACYMLAACIFVAGIV) form a helical membrane-spanning segment. The Cytoplasmic segment spans residues 63–89 (RDLIYQNALKQQPTLGIFMNPLVQGIA). A helical transmembrane segment spans residues 90-110 (KLIFCFGSVLVLSSMYKLGLV). An S-adenosyl-L-methionine-binding site is contributed by 94–96 (CFG). Topologically, residues 111 to 153 (GTYLGDYFGFLLPERVSGFPFNVNDNPMYNGSTLCFLSTALRY) are lumenal. The chain crosses the membrane as a helical span at residues 154–174 (GKVAGLLLTLEVFFVYRIALK). Residues 175-196 (FEEPFTAKIYAARDSKQAKKSE) lie on the Cytoplasmic side of the membrane. 176–177 (EE) contacts S-adenosyl-L-methionine.

Belongs to the class VI-like SAM-binding methyltransferase superfamily. PEMT/PEM2 methyltransferase family.

It is found in the endoplasmic reticulum membrane. Its subcellular location is the mitochondrion membrane. It carries out the reaction a 1,2-diacyl-sn-glycero-3-phospho-N-methylethanolamine + S-adenosyl-L-methionine = a 1,2-diacyl-sn-glycero-3-phospho-N,N-dimethylethanolamine + S-adenosyl-L-homocysteine + H(+). The enzyme catalyses a 1,2-diacyl-sn-glycero-3-phospho-N,N-dimethylethanolamine + S-adenosyl-L-methionine = a 1,2-diacyl-sn-glycero-3-phosphocholine + S-adenosyl-L-homocysteine + H(+). Its pathway is phospholipid metabolism; phosphatidylcholine biosynthesis. In terms of biological role, catalyzes the second two steps of the methylation pathway of phosphatidylcholine biosynthesis, the SAM-dependent methylation of phosphatidylmonomethylethanolamine (PMME) to phosphatidyldimethylethanolamine (PDME) and of PDME to phosphatidylcholine (PC). The protein is Phosphatidyl-N-methylethanolamine N-methyltransferase of Schizosaccharomyces pombe (strain 972 / ATCC 24843) (Fission yeast).